The primary structure comprises 855 residues: Homeobox-leucine zipper protein HOX33 (855 aa).

A disordered region spans residues 1–21; it reads MAAAAVGGRGERLSSSSPTAA. The segment at residues 26–89 is a DNA-binding region (homeobox); sequence DAGKYVRYTP…NRRCREKQRK (64 aa). Residues 84–126 are a coiled coil; sequence REKQRKEASRLQTVNRKLNAMNKLLMEENDRLQKQVSRLVYEN. The START domain maps to 168-390; it reads DANNPAGLLA…LRHIRQIAHE (223 aa).

It belongs to the HD-ZIP homeobox family. Class III subfamily. As to expression, expressed in seedlings, roots, stems, leaf sheaths and blades and panicles.

It localises to the nucleus. Probable transcription factor. The polypeptide is Homeobox-leucine zipper protein HOX33 (HOX33) (Oryza sativa subsp. indica (Rice)).